The primary structure comprises 318 residues: GTP 3',8-cyclase (318 aa).

The Radical SAM core domain maps to 4–218; that stretch reads KHGRNIDYLR…MSRSDLIPIE (215 aa). Residue R13 coordinates GTP. The [4Fe-4S] cluster site is built by C20 and C24. Y26 lines the S-adenosyl-L-methionine pocket. C27 contributes to the [4Fe-4S] cluster binding site. Position 62 (R62) interacts with GTP. Residue G66 participates in S-adenosyl-L-methionine binding. T93 contacts GTP. S117 contributes to the S-adenosyl-L-methionine binding site. K154 provides a ligand contact to GTP. S-adenosyl-L-methionine is bound at residue M188. [4Fe-4S] cluster is bound by residues C248 and C251. Position 253–255 (253–255) interacts with GTP; it reads KIR. C265 serves as a coordination point for [4Fe-4S] cluster.

The protein belongs to the radical SAM superfamily. MoaA family. In terms of assembly, monomer and homodimer. The cofactor is [4Fe-4S] cluster.

The catalysed reaction is GTP + AH2 + S-adenosyl-L-methionine = (8S)-3',8-cyclo-7,8-dihydroguanosine 5'-triphosphate + 5'-deoxyadenosine + L-methionine + A + H(+). It participates in cofactor biosynthesis; molybdopterin biosynthesis. Catalyzes the cyclization of GTP to (8S)-3',8-cyclo-7,8-dihydroguanosine 5'-triphosphate. The chain is GTP 3',8-cyclase from Clostridium acetobutylicum (strain ATCC 824 / DSM 792 / JCM 1419 / IAM 19013 / LMG 5710 / NBRC 13948 / NRRL B-527 / VKM B-1787 / 2291 / W).